The primary structure comprises 145 residues: D-aminoacyl-tRNA deacylase (145 aa).

Positions 137–138 match the Gly-cisPro motif, important for rejection of L-amino acids motif; sequence GP.

Belongs to the DTD family. As to quaternary structure, homodimer.

It localises to the cytoplasm. The enzyme catalyses glycyl-tRNA(Ala) + H2O = tRNA(Ala) + glycine + H(+). The catalysed reaction is a D-aminoacyl-tRNA + H2O = a tRNA + a D-alpha-amino acid + H(+). In terms of biological role, an aminoacyl-tRNA editing enzyme that deacylates mischarged D-aminoacyl-tRNAs. Also deacylates mischarged glycyl-tRNA(Ala), protecting cells against glycine mischarging by AlaRS. Acts via tRNA-based rather than protein-based catalysis; rejects L-amino acids rather than detecting D-amino acids in the active site. By recycling D-aminoacyl-tRNA to D-amino acids and free tRNA molecules, this enzyme counteracts the toxicity associated with the formation of D-aminoacyl-tRNA entities in vivo and helps enforce protein L-homochirality. The chain is D-aminoacyl-tRNA deacylase from Cereibacter sphaeroides (strain KD131 / KCTC 12085) (Rhodobacter sphaeroides).